The primary structure comprises 407 residues: 12S rRNA N(4)-cytidine methyltransferase METTL15 (407 aa).

Residues 100-102, D119, F146, D169, and Q176 each bind S-adenosyl-L-methionine; that span reads GGH. S358 carries the phosphoserine modification.

It belongs to the methyltransferase superfamily. RsmH family.

Its subcellular location is the mitochondrion matrix. The catalysed reaction is cytidine(839) in 12S rRNA + S-adenosyl-L-methionine = N(4)-methylcytidine(839) in 12S rRNA + S-adenosyl-L-homocysteine + H(+). Its function is as follows. N4-methylcytidine (m4C) methyltransferase responsible for the methylation of position C839 in mitochondrial 12S rRNA. Involved in the stabilization of 12S rRNA folding, therefore facilitating the assembly of the mitochondrial small ribosomal subunits. The sequence is that of 12S rRNA N(4)-cytidine methyltransferase METTL15 (METTL15) from Pongo abelii (Sumatran orangutan).